The primary structure comprises 369 residues: MKKTLAALIVGAFAASAANAAVVYNNEGTNVELGGRLSIIAEQSNSTIKDQKQQHGALRNQSSRFHIKATHNFGDGFYAQGYLETRLVSAQSGTESDNFGHIITKYAYVTLGNKALGEVKLGRAKTIADGITSAEDKEYGVLNNSKYIPIDGNTVGYTFKGIDGLVLGANYLLAQERYKYTTAAAAGAAGAAGAVAGEVYPQKISNGVQVGAKYDANNIIAGIAYGRTNYREDIASPDLGKKQQVNGALSTLGYRFSDLGLLVSLDSGYAKTKNYKDKHEKSYFVSPGFQYELMEDTNVYGNFKYERDSVDQGKKTREQAVLFGVDHKLHKQVLTYIEGAYARTRTTESKKGVKTEKEKSVGVGLRVYF.

The signal sequence occupies residues 1 to 20 (MKKTLAALIVGAFAASAANA).

Belongs to the Gram-negative porin family. Homotrimer.

Its subcellular location is the cell outer membrane. In terms of biological role, forms pores that allow passive diffusion of small molecules across the outer membrane. This is Outer membrane protein P2 (ompP2) from Haemophilus influenzae.